We begin with the raw amino-acid sequence, 207 residues long: LPS-assembly lipoprotein LptE (207 aa).

Positions 1–19 are cleaved as a signal peptide; it reads MRHRILTLLLGLAVLVTAG. Cys-20 carries N-palmitoyl cysteine lipidation. The S-diacylglycerol cysteine moiety is linked to residue Cys-20. The tract at residues 168–207 is disordered; sequence KNTQKNGDKPVSDANAAQGSTPTAVNETTLGEPAVSTSAK. Over residues 182–207 the composition is skewed to polar residues; the sequence is NAAQGSTPTAVNETTLGEPAVSTSAK.

The protein belongs to the LptE lipoprotein family. Component of the lipopolysaccharide transport and assembly complex. Interacts with LptD.

It is found in the cell outer membrane. Together with LptD, is involved in the assembly of lipopolysaccharide (LPS) at the surface of the outer membrane. Required for the proper assembly of LptD. Binds LPS and may serve as the LPS recognition site at the outer membrane. This Yersinia pseudotuberculosis serotype O:1b (strain IP 31758) protein is LPS-assembly lipoprotein LptE.